A 565-amino-acid polypeptide reads, in one-letter code: DNA repair protein RAD7 (565 aa).

Disordered regions lie at residues 1–22 and 41–68; these read MYRS…PNSA and WYQR…FTAE. The segment at 1–200 is hydrophilic; it reads MYRSRNRPKR…SKLVFNKLRD (200 aa). Basic and acidic residues predominate over residues 47–62; that stretch reads KKQEDATDEKKGKAED. Ser-64 and Ser-85 each carry phosphoserine. The segment at 105–137 is disordered; that stretch reads ADSDEEEYETSHISDTPVSLSSANDRESLTKKR. A compositionally biased stretch (polar residues) spans 115–127; sequence SHISDTPVSLSSA.

It to S.pombe SpCC613.14. Component of the global genome repair (GGR) complex composed of at least ABF1, RAD7 and RAD16. Interacts with ELC1.

In terms of biological role, component of the global genome repair (GGR) complex which promotes global genome nucleotide excision repair (GG-NER) which removes DNA damage from nontranscribing DNA. This protein is one of 10 proteins (RAD1, 2,3,4,7,10,14, 16,23 and MMS19) involved in excision repair of DNA damaged with UV light, bulky adducts, or cross-linking agents. This is DNA repair protein RAD7 (RAD7) from Saccharomyces cerevisiae (strain ATCC 204508 / S288c) (Baker's yeast).